We begin with the raw amino-acid sequence, 382 residues long: Pectinesterase (382 aa).

A signal peptide spans Met1–Ala16. Cys153 and Cys164 form a disulfide bridge. A glycan (N-linked (GlcNAc...) asparagine) is linked at Asn179. Residue Gln193 participates in substrate binding. Asp216 functions as the Proton donor in the catalytic mechanism. Asp242 serves as the catalytic Nucleophile. Positions 306 and 308 each coordinate substrate. 2 N-linked (GlcNAc...) asparagine glycosylation sites follow: Asn340 and Asn376.

It belongs to the pectinesterase family. As to expression, expressed throughout the midgut with particularly strong expression in the ventriculus.

The protein localises to the secreted. It catalyses the reaction [(1-&gt;4)-alpha-D-galacturonosyl methyl ester](n) + n H2O = [(1-&gt;4)-alpha-D-galacturonosyl](n) + n methanol + n H(+). It participates in glycan metabolism; pectin degradation; 2-dehydro-3-deoxy-D-gluconate from pectin: step 1/5. Its function is as follows. Pectinesterase which probably plays an important role in the digestion of plant cell walls. This is Pectinesterase from Sitophilus oryzae (Rice weevil).